The chain runs to 83 residues: Hainantoxin-III 7 (83 aa).

The N-terminal stretch at 1-21 (MKASMFLALAGLVLLFVVGYA) is a signal peptide. A propeptide spanning residues 22-48 (SESEEKEFPRELLSKVFAVDDFKGEER) is cleaved from the precursor. Disulfide bonds link cysteine 50/cysteine 65, cysteine 57/cysteine 70, and cysteine 64/cysteine 77. Position 81 is a leucine amide (leucine 81).

The protein belongs to the neurotoxin 10 (Hwtx-1) family. 15 (Hntx-3) subfamily. Monomer. In terms of tissue distribution, expressed by the venom gland.

Its subcellular location is the secreted. Functionally, selective antagonist of neuronal tetrodotoxin (TTX)-sensitive voltage-gated sodium channels (IC(50)=1270 nM on Nav1.1/SCN1A, 270 nM on Nav1.2/SCN2A, 491 nM on Nav1.3/SCN3A and 232 nM on Nav1.7/SCN9A). This toxin suppress Nav1.7 current amplitude without significantly altering the activation, inactivation, and repriming kinetics. Short extreme depolarizations partially activate the toxin-bound channel, indicating voltage-dependent inhibition of this toxin. This toxin increases the deactivation of the Nav1.7 current after extreme depolarizations. The toxin-Nav1.7 complex is gradually dissociated upon prolonged strong depolarizations in a voltage-dependent manner, and the unbound toxin rebinds to Nav1.7 after a long repolarization. Moreover, analysis of chimeric channels showed that the DIIS3-S4 linker is critical for toxin binding to Nav1.7. These data are consistent with this toxin interacting with Nav1.7 site 4 and trapping the domain II voltage sensor in the closed state. The polypeptide is Hainantoxin-III 7 (Cyriopagopus hainanus (Chinese bird spider)).